The following is a 520-amino-acid chain: Chaperone Ric-8B (520 aa).

The residue at position 468 (serine 468) is a Phosphoserine. Residue threonine 473 is modified to Phosphothreonine.

The protein belongs to the synembryn family. As to quaternary structure, interacts with GDP-bound G(s) G-alpha proteins GNAL and GNAS. Does not interact with G-alpha proteins when they are in complex with subunits beta and gamma.

It localises to the cytoplasm. The protein resides in the cell cortex. Chaperone that specifically binds and folds nascent G(s) G-alpha proteins (GNAS and GNAL) prior to G protein heterotrimer formation, promoting their association with the plasma membrane. Also acts as a guanine nucleotide exchange factor (GEF) for G(s) proteins by stimulating exchange of bound GDP for free GTP. Acts as an important component for odorant signal transduction by mediating GNAL (G(olf)-alpha) folding, thereby promoting-dependent cAMP accumulation in olfactory sensory neurons. The chain is Chaperone Ric-8B (Ric8b) from Rattus norvegicus (Rat).